The sequence spans 274 residues: Ribosomal RNA small subunit methyltransferase A (274 aa).

S-adenosyl-L-methionine is bound by residues Asn-28, Leu-30, Gly-55, Glu-77, Asp-103, and Asn-122.

Belongs to the class I-like SAM-binding methyltransferase superfamily. rRNA adenine N(6)-methyltransferase family. RsmA subfamily.

It is found in the cytoplasm. The enzyme catalyses adenosine(1518)/adenosine(1519) in 16S rRNA + 4 S-adenosyl-L-methionine = N(6)-dimethyladenosine(1518)/N(6)-dimethyladenosine(1519) in 16S rRNA + 4 S-adenosyl-L-homocysteine + 4 H(+). Specifically dimethylates two adjacent adenosines (A1518 and A1519) in the loop of a conserved hairpin near the 3'-end of 16S rRNA in the 30S particle. May play a critical role in biogenesis of 30S subunits. The sequence is that of Ribosomal RNA small subunit methyltransferase A from Sinorhizobium medicae (strain WSM419) (Ensifer medicae).